We begin with the raw amino-acid sequence, 926 residues long: MVSSVLPNPTSAECWAALLHDPMTLDMDAVLSDFVRSTGAEPGLARDLLEGKNWDLTAALSDYEQLRQVHTANLPHVFNEGRGPKQPEREPQPGHKVERPCLQRQDDIAQEKRLSRGISHASSAIVSLARSHVASECNNEQFPLEMPIYTFQLPDLSVYSEDFRSFIERDLIEQATMVALEQAGRLNWWSTVCTSCKRLLPLATTGDGNCLLHAASLGMWGFHDRDLVLRKALYTMMRTGAEREALKRRWRWQQTQQNKEEEWEREWTELLKLASSEPRTHFSKNGGTGGGVDNSEDPVYESLEEFHVFVLAHILRRPIVVVADTMLRDSGGEAFAPIPFGGIYLPLEVPPNRCHCSPLVLAYDQAHFSALVSMEQRDQQREQAVIPLTDSEHKLLPLHFAVDPGKDWEWGKDDNDNARLAHLILSLEAKLNLLHSYMNVTWIRIPSETRAPLAQPESPTASAGEDVQSLADSLDSDRDSVCSNSNSNNGKNGKDKEKEKQRKEKDKTRADSVANKLGSFSKTLGIKLKKNMGGLGGLVHGKMGRANSANGKNGDSAERGKEKKAKSRKGSKEESGASASTSPSEKTTPSPTDKAAGASPAEKGGGPRGDAWKYSTDVKLSLNILRAAMQGERKFIFAGLLLTSHRHQFHEEMIGYYLTSAQERFSAEQEQRRRDAATAAAAAAAAAAATAKRPPRRPETEGVPVPERASPGPPTQLVLKLKERPSPGPAAGRAARAAAGGTASPGGGARRASASGPVPGRSPPAPARQSVIHVQASGARDEACAPAVGALRPCATYPQQNRSLSSQSYSPARAAALRTVNTVESLARAVPGALPGAAGTAGAAEHKSQTYTNGFGALRDGLEFADADAPTARSNGECGRGGPGPVQRRCQRENCAFYGRAETEHYCSYCYREELRRRREARGARP.

The tract at residues 75–99 is disordered; it reads PHVFNEGRGPKQPEREPQPGHKVER. The span at 82–99 shows a compositional bias: basic and acidic residues; that stretch reads RGPKQPEREPQPGHKVER. Serine 119 bears the Phosphoserine mark. A TRAF-binding region spans residues 168–410; sequence ERDLIEQATM…AVDPGKDWEW (243 aa). Positions 183–449 are catalytic; the sequence is AGRLNWWSTV…VTWIRIPSET (267 aa). Positions 199-374 constitute an OTU domain; sequence LLPLATTGDG…QAHFSALVSM (176 aa). Residue aspartate 207 is part of the active site. The active-site Nucleophile is cysteine 210. Histidine 367 (proton acceptor) is an active-site residue. 3 disordered regions span residues 452–514, 537–613, and 668–768; these read PLAQ…DSVA, GLVH…DAWK, and EQEQ…APAR. A compositionally biased stretch (low complexity) spans 481 to 491; it reads VCSNSNSNNGK. Basic and acidic residues predominate over residues 492–510; sequence NGKDKEKEKQRKEKDKTRA. Residues 494 to 509 carry the Nuclear localization signal motif; the sequence is KDKEKEKQRKEKDKTR. 3 stretches are compositionally biased toward low complexity: residues 576-592, 677-691, and 729-742; these read GASASTSPSEKTTPSPT, ATAAAAAAAAAAATA, and PAAGRAARAAAGGT. Arginine 880 carries the post-translational modification Omega-N-methylarginine. An A20-type zinc finger spans residues 884 to 919; that stretch reads GPVQRRCQRENCAFYGRAETEHYCSYCYREELRRRR. Zn(2+) is bound by residues cysteine 890, cysteine 895, cysteine 907, and cysteine 910.

It belongs to the peptidase C64 family.

The protein resides in the cytoplasm. The protein localises to the nucleus. The enzyme catalyses Thiol-dependent hydrolysis of ester, thioester, amide, peptide and isopeptide bonds formed by the C-terminal Gly of ubiquitin (a 76-residue protein attached to proteins as an intracellular targeting signal).. Functionally, deubiquitinase, which cleaves 'Lys-11'-linked polyubiquitin chains. Might be required for PA28-20S proteasome assembly. This is OTU domain-containing protein 7A (OTUD7A) from Homo sapiens (Human).